The chain runs to 427 residues: 3-phosphoshikimate 1-carboxyvinyltransferase (427 aa).

The 3-phosphoshikimate site is built by Lys-23, Ser-24, and Arg-28. Lys-23 is a binding site for phosphoenolpyruvate. Residues Gly-97 and Arg-125 each contribute to the phosphoenolpyruvate site. Residues Ser-170, Ser-171, Gln-172, Ser-198, Asp-314, Asn-337, and Lys-341 each contribute to the 3-phosphoshikimate site. Gln-172 is a binding site for phosphoenolpyruvate. Residue Asp-314 is the Proton acceptor of the active site. The phosphoenolpyruvate site is built by Arg-345, Arg-387, and Lys-412.

This sequence belongs to the EPSP synthase family. Monomer.

The protein resides in the cytoplasm. The catalysed reaction is 3-phosphoshikimate + phosphoenolpyruvate = 5-O-(1-carboxyvinyl)-3-phosphoshikimate + phosphate. It functions in the pathway metabolic intermediate biosynthesis; chorismate biosynthesis; chorismate from D-erythrose 4-phosphate and phosphoenolpyruvate: step 6/7. Functionally, catalyzes the transfer of the enolpyruvyl moiety of phosphoenolpyruvate (PEP) to the 5-hydroxyl of shikimate-3-phosphate (S3P) to produce enolpyruvyl shikimate-3-phosphate and inorganic phosphate. The sequence is that of 3-phosphoshikimate 1-carboxyvinyltransferase from Buchnera aphidicola subsp. Acyrthosiphon pisum (strain Tuc7).